The following is a 259-amino-acid chain: GTP cyclohydrolase FolE2 (259 aa).

It belongs to the GTP cyclohydrolase IV family.

It carries out the reaction GTP + H2O = 7,8-dihydroneopterin 3'-triphosphate + formate + H(+). Its pathway is cofactor biosynthesis; 7,8-dihydroneopterin triphosphate biosynthesis; 7,8-dihydroneopterin triphosphate from GTP: step 1/1. In terms of biological role, converts GTP to 7,8-dihydroneopterin triphosphate. This is GTP cyclohydrolase FolE2 from Thermotoga petrophila (strain ATCC BAA-488 / DSM 13995 / JCM 10881 / RKU-1).